Consider the following 366-residue polypeptide: MRIMISGGGTGGHIYPAIAIANQITEKHPQAKIQFVGTAKGLESELIPKAGYEIKHITVSYLRRKISFHNVKSIAKLIKGLVEARRLIKDFNPDVVIGTGGFVCGPVLYMATKLGYKTLIHEQNVFPGLTNRVLGNYVDRIALSFEEAERYFKSKEKLIITGNPIRREFLEISQEEATQKYNSGSKKHLILVVGGSGGAARINETVVNLLKKHPNNDFKILLVTGQRHFETIKLQLGKKQDTLRYNDVLPYLTNMPHALKACDLLICSAGAITIAEVTAVGKPAIIIPKSYTAGNHQEFNAKALEEKGAAIMIKEEVLNADRLYLEITGLLSDKKRLEQMAKASALSAKTQALEMIYAEVISMIKS.

UDP-N-acetyl-alpha-D-glucosamine is bound by residues 10–12, N124, R166, S196, and Q297; that span reads TGG.

Belongs to the glycosyltransferase 28 family. MurG subfamily.

The protein localises to the cell membrane. It catalyses the reaction di-trans,octa-cis-undecaprenyl diphospho-N-acetyl-alpha-D-muramoyl-L-alanyl-D-glutamyl-meso-2,6-diaminopimeloyl-D-alanyl-D-alanine + UDP-N-acetyl-alpha-D-glucosamine = di-trans,octa-cis-undecaprenyl diphospho-[N-acetyl-alpha-D-glucosaminyl-(1-&gt;4)]-N-acetyl-alpha-D-muramoyl-L-alanyl-D-glutamyl-meso-2,6-diaminopimeloyl-D-alanyl-D-alanine + UDP + H(+). It participates in cell wall biogenesis; peptidoglycan biosynthesis. Functionally, cell wall formation. Catalyzes the transfer of a GlcNAc subunit on undecaprenyl-pyrophosphoryl-MurNAc-pentapeptide (lipid intermediate I) to form undecaprenyl-pyrophosphoryl-MurNAc-(pentapeptide)GlcNAc (lipid intermediate II). In Alkaliphilus metalliredigens (strain QYMF), this protein is UDP-N-acetylglucosamine--N-acetylmuramyl-(pentapeptide) pyrophosphoryl-undecaprenol N-acetylglucosamine transferase.